The chain runs to 271 residues: 4-diphosphocytidyl-2-C-methyl-D-erythritol kinase (271 aa).

The active site involves Lys8. Residue 90 to 100 (PFGAGLGGGSA) participates in ATP binding. Asp132 is a catalytic residue.

This sequence belongs to the GHMP kinase family. IspE subfamily.

The catalysed reaction is 4-CDP-2-C-methyl-D-erythritol + ATP = 4-CDP-2-C-methyl-D-erythritol 2-phosphate + ADP + H(+). The protein operates within isoprenoid biosynthesis; isopentenyl diphosphate biosynthesis via DXP pathway; isopentenyl diphosphate from 1-deoxy-D-xylulose 5-phosphate: step 3/6. In terms of biological role, catalyzes the phosphorylation of the position 2 hydroxy group of 4-diphosphocytidyl-2C-methyl-D-erythritol. The chain is 4-diphosphocytidyl-2-C-methyl-D-erythritol kinase from Parabacteroides distasonis (strain ATCC 8503 / DSM 20701 / CIP 104284 / JCM 5825 / NCTC 11152).